A 385-amino-acid polypeptide reads, in one-letter code: Single-stranded DNA-binding protein 4 (385 aa).

Residue Met-1 is modified to N-acetylmethionine. In terms of domain architecture, LisH spans 17–49; sequence AREKLALYVYEYLLHIGAQKSAQTFLSEIRWEK. 2 disordered regions span residues 122–287 and 331–363; these read FQGP…NSSE and GSGD…GEMA. Residues 245 to 263 are compositionally biased toward low complexity; sequence SPSGNSIPYSSSSPGSYTG. Pro residues predominate over residues 267-277; it reads GGGPPGTPIMP. At Ser-341 the chain carries Phosphoserine. Thr-355 is subject to Phosphothreonine.

It is found in the nucleus. In Homo sapiens (Human), this protein is Single-stranded DNA-binding protein 4 (SSBP4).